A 234-amino-acid chain; its full sequence is Sugar fermentation stimulation protein homolog (234 aa).

Belongs to the SfsA family.

The polypeptide is Sugar fermentation stimulation protein homolog (Shewanella frigidimarina (strain NCIMB 400)).